A 393-amino-acid chain; its full sequence is Demethylspheroidene O-methyltransferase (393 aa).

Residues 1–36 (MPKDDHTGATADRTAQPTGTGKQPLVPGQPGAAPVQ) form a disordered region. Positions 26 to 36 (VPGQPGAAPVQ) are enriched in low complexity. Residues Asp-259 and Arg-297 each coordinate S-adenosyl-L-methionine.

The protein belongs to the class I-like SAM-binding methyltransferase superfamily. Cation-independent O-methyltransferase family.

It carries out the reaction demethylspheroidene + S-adenosyl-L-methionine = spheroidene + S-adenosyl-L-homocysteine + H(+). It participates in carotenoid biosynthesis; spheroidene biosynthesis. Methyltransferase that mediates the O-methylation of 1-hydroxy carotenoids. Converts hydroxyneurosporene to methoxyneurosporene or demethylspheroidene to spheroidene. Also able to produce spirilloxanthin. In Rhodobacter capsulatus (strain ATCC BAA-309 / NBRC 16581 / SB1003), this protein is Demethylspheroidene O-methyltransferase (crtF).